Reading from the N-terminus, the 485-residue chain is Telomeric DNA-binding factor trf1 (485 aa).

Positions 1–20 (MSKRSLDPSDDFKGQKRLAI) are enriched in basic and acidic residues. Residues 1–23 (MSKRSLDPSDDFKGQKRLAIDPE) are disordered. The 58-residue stretch at 400–457 (RRVANRRSWTKEEEEALLDGLDLVKGPRWSQILELYGPGGKKSEVLKYRNQVQLKDKA) folds into the HTH myb-type domain. The H-T-H motif DNA-binding region spans 428–453 (WSQILELYGPGGKKSEVLKYRNQVQL).

As to quaternary structure, homodimer.

It localises to the nucleus. Binds the telomeric double-stranded TTACAGG repeat and regulates telomere length. The protein is Telomeric DNA-binding factor trf1 (trf1) of Schizosaccharomyces pombe (strain 972 / ATCC 24843) (Fission yeast).